We begin with the raw amino-acid sequence, 415 residues long: Serine hydroxymethyltransferase 1 (415 aa).

(6S)-5,6,7,8-tetrahydrofolate contacts are provided by residues leucine 122 and 126–128 (GHL). Lysine 230 bears the N6-(pyridoxal phosphate)lysine mark.

The protein belongs to the SHMT family. Homodimer. Pyridoxal 5'-phosphate is required as a cofactor.

It localises to the cytoplasm. The catalysed reaction is (6R)-5,10-methylene-5,6,7,8-tetrahydrofolate + glycine + H2O = (6S)-5,6,7,8-tetrahydrofolate + L-serine. Its pathway is one-carbon metabolism; tetrahydrofolate interconversion. It participates in amino-acid biosynthesis; glycine biosynthesis; glycine from L-serine: step 1/1. Functionally, catalyzes the reversible interconversion of serine and glycine with tetrahydrofolate (THF) serving as the one-carbon carrier. This reaction serves as the major source of one-carbon groups required for the biosynthesis of purines, thymidylate, methionine, and other important biomolecules. Also exhibits THF-independent aldolase activity toward beta-hydroxyamino acids, producing glycine and aldehydes, via a retro-aldol mechanism. In Burkholderia thailandensis (strain ATCC 700388 / DSM 13276 / CCUG 48851 / CIP 106301 / E264), this protein is Serine hydroxymethyltransferase 1.